The primary structure comprises 606 residues: MQQHDSDSFWGGIVKAMGLVFGDIGTSPIYTLTVVFALTEPTMQNVFGILSLVFWTMTILVTAEYAWLAMRLGRKGEGGAIVLKEILARMIRPGRQLTFVVFLTYLGVSLLMGDGVITPAISILSAVEGMVLIPGLGGLHQSWLILIAAIIAVGLFVFQFKGTDKVAGAFGPIMVVWFASLALSGAVSVASHPTVLFAVSPHYALQFLLDNGLAGFIVLSEVILCATGGEALYADMGHLGRKPIVRAWYIVFWALYLNYLGQGAFIISHPGAKNYLFGMVQHQAPLLYIPFLILTILATIIASQAMISGVFSIVYQGITTRILPLLKVDYTSSHLKSQIYIGSVNWMLMIAVVVIMLVFQKSENLAAAYGLAVTGSMSITGIMMILILSRTTKAWKAVFAALITVVDLVFFTACLHKLPHGGYWSIILASVPFITILVWTKGQRALYRALRPLELDTFELAYEQIYAKGRNIPGTGLFFVKEYNVVPPYVVHCIIRSNIIYERNVFISIVRTDEPFGLVSELKTGIATGLDAFEIHAGYMEHLEIETLLQQHGIKEKVIFYGVEDISTPNPVWKLFATIKRQTPNFVQFNKLPASRLQGVVTRVEM.

12 consecutive transmembrane segments (helical) span residues 18 to 38, 46 to 66, 97 to 117, 138 to 158, 166 to 186, 212 to 232, 247 to 267, 287 to 307, 339 to 359, 368 to 388, 395 to 415, and 418 to 438; these read GLVFGDIGTSPIYTLTVVFAL, VFGILSLVFWTMTILVTAEYA, LTFVVFLTYLGVSLLMGDGVI, GLHQSWLILIAAIIAVGLFVF, VAGAFGPIMVVWFASLALSGA, GLAGFIVLSEVILCATGGEAL, AWYIVFWALYLNYLGQGAFII, LYIPFLILTILATIIASQAMI, IYIGSVNWMLMIAVVVIMLVF, AYGLAVTGSMSITGIMMILIL, WKAVFAALITVVDLVFFTACL, and LPHGGYWSIILASVPFITILV.

It belongs to the HAK/KUP transporter (TC 2.A.72) family.

The protein localises to the cell inner membrane. The catalysed reaction is K(+)(in) + H(+)(in) = K(+)(out) + H(+)(out). Its function is as follows. Transport of potassium into the cell. Likely operates as a K(+):H(+) symporter. This chain is Probable potassium transport system protein Kup, found in Trichlorobacter lovleyi (strain ATCC BAA-1151 / DSM 17278 / SZ) (Geobacter lovleyi).